Consider the following 333-residue polypeptide: MFRQIPKFSVIRASCFASRCFYSSKSSNATYIASLLAEYDKTTNRSKKPRLKSRNDPKPSFKGAKAKKPDRHINQTGKERDREALKVVLDEVQSKYKSNNAIVILPTGNLEETQLSKTSLTLNLDEHGLQVVGEKKDSKGRSVPLVKVVDRQTAIKNYSDYLHQQVTRKFSSSFRKAINTSNVANKDPWKVIKVSWNISPQDLASQKCNEIEQMLNKGQNVYILIGSKGVINKSIDNPEDLFNEQHKREVSLDDIEALRRQKIVDTLDSMLETLPTSSIGNDGSISDKIIYKIKAQPKKDDKDEKKRLKELKKQERQEKIRLRTEKKRAESKA.

The transit peptide at 1 to 28 directs the protein to the mitochondrion; the sequence is MFRQIPKFSVIRASCFASRCFYSSKSSN. Disordered stretches follow at residues 43 to 80 and 296 to 333; these read TNRSKKPRLKSRNDPKPSFKGAKAKKPDRHINQTGKER and QPKKDDKDEKKRLKELKKQERQEKIRLRTEKKRAESKA. 2 stretches are compositionally biased toward basic and acidic residues: residues 71-80 and 297-333; these read RHINQTGKER and PKKDDKDEKKRLKELKKQERQEKIRLRTEKKRAESKA.

The protein belongs to the AIM23 family.

It is found in the mitochondrion. The protein is Altered inheritance of mitochondria protein 23, mitochondrial (AIM23) of Komagataella phaffii (strain GS115 / ATCC 20864) (Yeast).